The primary structure comprises 394 residues: Argininosuccinate synthase (394 aa).

Residues 7-15 (AYSGGLDTS) and alanine 34 each bind ATP. L-citrulline is bound by residues tyrosine 85 and serine 90. Residue glycine 115 participates in ATP binding. Threonine 117, asparagine 121, and aspartate 122 together coordinate L-aspartate. Asparagine 121 provides a ligand contact to L-citrulline. Residues arginine 125, serine 176, serine 185, glutamate 261, and tyrosine 273 each contribute to the L-citrulline site.

The protein belongs to the argininosuccinate synthase family. Type 1 subfamily. Homotetramer.

It is found in the cytoplasm. The enzyme catalyses L-citrulline + L-aspartate + ATP = 2-(N(omega)-L-arginino)succinate + AMP + diphosphate + H(+). It functions in the pathway amino-acid biosynthesis; L-arginine biosynthesis; L-arginine from L-ornithine and carbamoyl phosphate: step 2/3. This Ehrlichia ruminantium (strain Welgevonden) protein is Argininosuccinate synthase.